We begin with the raw amino-acid sequence, 198 residues long: V-type ATP synthase subunit E (198 aa).

The protein belongs to the V-ATPase E subunit family.

Functionally, produces ATP from ADP in the presence of a proton gradient across the membrane. The sequence is that of V-type ATP synthase subunit E from Clostridium perfringens (strain SM101 / Type A).